Reading from the N-terminus, the 1101-residue chain is Zinc finger SWIM domain-containing protein 4 (1101 aa).

The interval 1-29 (MEPPAAKRSRGCPAGDEPGTGARRSRPEP) is disordered. An SWIM-type zinc finger spans residues 134 to 171 (YHVSISFDRCKITSVSCGCDNRDLFYCAHVVALSLYRI).

The chain is Zinc finger SWIM domain-containing protein 4 (Zswim4) from Mus musculus (Mouse).